Consider the following 583-residue polypeptide: Afadin- and alpha-actinin-binding protein (583 aa).

3 coiled-coil regions span residues 108–220, 255–333, and 420–453; these read NNVE…LAIE, DYEA…QLTN, and EEKE…AIRL. The segment at 285–328 is disordered; the sequence is LSPCPPLNRGGSAEESQELGDSDREERSAETSRETLDQSCEHAR. Residues 305–328 are compositionally biased toward basic and acidic residues; sequence DSDREERSAETSRETLDQSCEHAR. A disordered region spans residues 480 to 527; the sequence is DRMRSSSSDGQSALSVKSEPEIRTSSSKAPPVKSSAYTTFSTPKSSKS. Over residues 484 to 494 the composition is skewed to polar residues; it reads SSSSDGQSALS. A compositionally biased stretch (low complexity) spans 504 to 515; that stretch reads SSSKAPPVKSSA. A compositionally biased stretch (polar residues) spans 516-527; that stretch reads YTTFSTPKSSKS.

The protein belongs to the ADIP family.

The protein resides in the cell junction. Its subcellular location is the adherens junction. The protein localises to the cytoplasm. It localises to the cytoskeleton. It is found in the microtubule organizing center. The protein resides in the centrosome. Its subcellular location is the centriolar satellite. Functionally, belongs to an adhesion system, which plays a role in the organization of homotypic, interneuronal and heterotypic cell-cell adherens junctions (AJs). Involved in cell movement. Acts as a centrosome maturation factor, probably by maintaining the integrity of the pericentriolar material and proper microtubule nucleation at mitotic spindle poles. This chain is Afadin- and alpha-actinin-binding protein (ssx2ip), found in Oryzias latipes (Japanese rice fish).